The primary structure comprises 1937 residues: Collagen-like protein 7 (1937 aa).

Residues Asn6 and Asn21 are each glycosylated (N-linked (GlcNAc...) asparagine; by host). Disordered regions lie at residues 88 to 248 (CKGN…KGDK), 294 to 531 (NLKG…PDLG), 583 to 643 (LKGD…NQGV), and 670 to 1144 (IKGD…DTAT). 5 consecutive Collagen-like domains span residues 102 to 161 (GPKG…KGEK), 168 to 227 (GEKG…KGDI), 297 to 356 (GEKG…KGEK), 363 to 422 (GDKG…IGEK), and 453 to 512 (GDKG…KGDK). Residues 296–514 (KGEKGDKGNK…DKGDKGDKGD (219 aa)) show a composition bias toward basic and acidic residues. Residue Asn515 is glycosylated (N-linked (GlcNAc...) asparagine; by host). 3 stretches are compositionally biased toward basic and acidic residues: residues 584–605 (KGDK…KGDK), 614–625 (KGEKGDKGDKGD), and 670–899 (IKGD…KGDK). 5 Collagen-like domains span residues 672-731 (GDKG…KGDK), 735-854 (GNKG…KGNI), 867-926 (GLKG…KGDK), 936-995 (GIKG…KGDK), and 1023-1142 (GSKG…KGDT). Residue Asn902 is glycosylated (N-linked (GlcNAc...) asparagine; by host). Residues 907-1141 (YKGDKGDKGS…DKGDKGDKGD (235 aa)) are compositionally biased toward basic and acidic residues. Asn1178, Asn1192, Asn1212, Asn1217, Asn1245, Asn1246, Asn1255, Asn1317, Asn1422, Asn1427, Asn1432, Asn1443, Asn1452, Asn1477, Asn1494, Asn1506, Asn1513, Asn1533, Asn1598, Asn1619, Asn1620, Asn1632, Asn1641, Asn1663, Asn1664, Asn1672, Asn1682, Asn1683, Asn1732, Asn1735, Asn1746, Asn1756, Asn1784, Asn1842, and Asn1934 each carry an N-linked (GlcNAc...) asparagine; by host glycan.

Post-translationally, may be hydroxylated on lysine by the viral-encoded procollagen-lysine,2-oxoglutarate 5-dioxygenase.

The protein resides in the virion. Its function is as follows. May participate in the formation of a layer of cross-linked glycosylated fibrils at the viral surface thus giving it a hairy-like appearance. This is Collagen-like protein 7 from Acanthamoeba polyphaga mimivirus (APMV).